A 104-amino-acid polypeptide reads, in one-letter code: Putative pterin-4-alpha-carbinolamine dehydratase (104 aa).

The protein belongs to the pterin-4-alpha-carbinolamine dehydratase family.

It carries out the reaction (4aS,6R)-4a-hydroxy-L-erythro-5,6,7,8-tetrahydrobiopterin = (6R)-L-erythro-6,7-dihydrobiopterin + H2O. In Rhizobium meliloti (strain 1021) (Ensifer meliloti), this protein is Putative pterin-4-alpha-carbinolamine dehydratase (pcbD).